The primary structure comprises 266 residues: NAD-capped RNA hydrolase NudC (266 aa).

Substrate is bound at residue Arg-74. Zn(2+)-binding residues include Cys-103, Cys-106, Cys-121, and Cys-124. Tyr-129 is a binding site for substrate. Residues 130 to 253 form the Nudix hydrolase domain; the sequence is PRVSPCIIVA…TIARVLIDET (124 aa). Positions 163, 179, and 183 each coordinate a divalent metal cation. Positions 164 to 185 match the Nudix box motif; sequence GFVEAGETLEQCVAREVEEETG. 197–204 is a substrate binding site; it reads QPWAFPSN. A divalent metal cation is bound at residue Glu-224. Ala-246 is a binding site for substrate.

Belongs to the Nudix hydrolase family. NudC subfamily. As to quaternary structure, homodimer. Mg(2+) is required as a cofactor. The cofactor is Mn(2+). Zn(2+) serves as cofactor.

It catalyses the reaction a 5'-end NAD(+)-phospho-ribonucleoside in mRNA + H2O = a 5'-end phospho-adenosine-phospho-ribonucleoside in mRNA + beta-nicotinamide D-ribonucleotide + 2 H(+). It carries out the reaction NAD(+) + H2O = beta-nicotinamide D-ribonucleotide + AMP + 2 H(+). The catalysed reaction is NADH + H2O = reduced beta-nicotinamide D-ribonucleotide + AMP + 2 H(+). In terms of biological role, mRNA decapping enzyme that specifically removes the nicotinamide adenine dinucleotide (NAD) cap from a subset of mRNAs by hydrolyzing the diphosphate linkage to produce nicotinamide mononucleotide (NMN) and 5' monophosphate mRNA. The NAD-cap is present at the 5'-end of some mRNAs and stabilizes RNA against 5'-processing. Has preference for mRNAs with a 5'-end purine. Catalyzes the hydrolysis of a broad range of dinucleotide pyrophosphates. This chain is NAD-capped RNA hydrolase NudC, found in Photobacterium profundum (strain SS9).